Consider the following 481-residue polypeptide: Probable glycine dehydrogenase (decarboxylating) subunit 2 (481 aa).

K265 carries the N6-(pyridoxal phosphate)lysine modification.

This sequence belongs to the GcvP family. C-terminal subunit subfamily. In terms of assembly, the glycine cleavage system is composed of four proteins: P, T, L and H. In this organism, the P 'protein' is a heterodimer of two subunits. Pyridoxal 5'-phosphate is required as a cofactor.

It carries out the reaction N(6)-[(R)-lipoyl]-L-lysyl-[glycine-cleavage complex H protein] + glycine + H(+) = N(6)-[(R)-S(8)-aminomethyldihydrolipoyl]-L-lysyl-[glycine-cleavage complex H protein] + CO2. Its function is as follows. The glycine cleavage system catalyzes the degradation of glycine. The P protein binds the alpha-amino group of glycine through its pyridoxal phosphate cofactor; CO(2) is released and the remaining methylamine moiety is then transferred to the lipoamide cofactor of the H protein. The sequence is that of Probable glycine dehydrogenase (decarboxylating) subunit 2 from Thermosipho melanesiensis (strain DSM 12029 / CIP 104789 / BI429).